Reading from the N-terminus, the 245-residue chain is tRNA1(Val) (adenine(37)-N6)-methyltransferase (245 aa).

Belongs to the methyltransferase superfamily. tRNA (adenine-N(6)-)-methyltransferase family.

It is found in the cytoplasm. It catalyses the reaction adenosine(37) in tRNA1(Val) + S-adenosyl-L-methionine = N(6)-methyladenosine(37) in tRNA1(Val) + S-adenosyl-L-homocysteine + H(+). Its function is as follows. Specifically methylates the adenine in position 37 of tRNA(1)(Val) (anticodon cmo5UAC). The chain is tRNA1(Val) (adenine(37)-N6)-methyltransferase from Escherichia fergusonii (strain ATCC 35469 / DSM 13698 / CCUG 18766 / IAM 14443 / JCM 21226 / LMG 7866 / NBRC 102419 / NCTC 12128 / CDC 0568-73).